The chain runs to 354 residues: Probable DNA repair protein RAD51 homolog 4 (354 aa).

An ATP-binding site is contributed by 115 to 122 (GNTSCGKT).

Belongs to the RecA family. RAD51 subfamily.

The protein localises to the nucleus. Its function is as follows. Involved in the homologous recombination repair (HRR) pathway of double-stranded DNA breaks arising during DNA replication or induced by DNA-damaging agents. The sequence is that of Probable DNA repair protein RAD51 homolog 4 (rad51d) from Dictyostelium discoideum (Social amoeba).